A 135-amino-acid polypeptide reads, in one-letter code: Lymphocyte antigen 6 complex locus protein G6d (135 aa).

Positions 1–19 are cleaved as a signal peptide; sequence MNSQLVGILLSALLGVALG. Residues 22-121 form the UPAR/Ly6 domain; sequence TRCYDCGGGP…ASSVTPLCIL (100 aa). Intrachain disulfides connect cysteine 24–cysteine 48, cysteine 27–cysteine 35, cysteine 42–cysteine 76, cysteine 82–cysteine 101, and cysteine 102–cysteine 107. Residue threonine 68 is glycosylated (O-linked (GalNAc...) threonine). Asparagine 108 carries GPI-anchor amidated asparagine lipidation. A propeptide spans 109–135 (removed in mature form); the sequence is SAVASSVTPLCILAAAVTTLAWLLPGL.

In terms of assembly, homodimer. Post-translationally, O-glycosylated. As to expression, expressed in embryonic tissue and adult lung, kidney, brain, liver and spleen.

Its subcellular location is the cell membrane. It localises to the cell projection. It is found in the filopodium. The sequence is that of Lymphocyte antigen 6 complex locus protein G6d (Ly6g6d) from Mus musculus (Mouse).